The primary structure comprises 254 residues: Small ribosomal subunit protein uS2 (254 aa).

Belongs to the universal ribosomal protein uS2 family.

The polypeptide is Small ribosomal subunit protein uS2 (Borrelia hermsii (strain HS1 / DAH)).